A 180-amino-acid chain; its full sequence is Ribulose bisphosphate carboxylase small subunit, chloroplastic 1 (180 aa).

A chloroplast-targeting transit peptide spans 1–56 (MASSVISSAAVATRTNVAQASMVAPFNGLKSAVSFPVSSKQNLDITSIASNGGRVQ).

The protein belongs to the RuBisCO small chain family. As to quaternary structure, heterohexadecamer of 8 large and 8 small subunits.

It localises to the plastid. It is found in the chloroplast. Its function is as follows. RuBisCO catalyzes two reactions: the carboxylation of D-ribulose 1,5-bisphosphate, the primary event in carbon dioxide fixation, as well as the oxidative fragmentation of the pentose substrate. Both reactions occur simultaneously and in competition at the same active site. Although the small subunit is not catalytic it is essential for maximal activity. The sequence is that of Ribulose bisphosphate carboxylase small subunit, chloroplastic 1 from Petunia hybrida (Petunia).